The chain runs to 310 residues: Transcription initiation factor IIB (310 aa).

The TFIIB-type zinc finger occupies 9 to 41 (EKETKCPECGSDDLRGDYERAEIVCGKCGLVID). The Zn(2+) site is built by Cys-14, Cys-17, Cys-33, and Cys-36. A run of 2 repeats spans residues 127–210 (SELD…TREL) and 221–302 (DYVP…ELTE).

It belongs to the TFIIB family.

Its function is as follows. Stabilizes TBP binding to an archaeal box-A promoter. Also responsible for recruiting RNA polymerase II to the pre-initiation complex (DNA-TBP-TFIIB). This Methanothermobacter thermautotrophicus (strain ATCC 29096 / DSM 1053 / JCM 10044 / NBRC 100330 / Delta H) (Methanobacterium thermoautotrophicum) protein is Transcription initiation factor IIB.